Reading from the N-terminus, the 122-residue chain is uncharacterized protein (122 aa).

The protein resides in the plastid. This is an uncharacterized protein from Euglena longa (Euglenophycean alga).